A 769-amino-acid polypeptide reads, in one-letter code: MAQWNQLQQLDTRYLEQLHQLYSDSFPMELRQFLAPWIESQDWAFAASKESHATLVFHNLLGEIDQQYSRFLQESNVLYQHNLRRIKQFLQSRYLEKPMEIARIVARCLWEEGRLLQTAAAAAQQGGPASHPNAAVVTEKQQMLEQHLQDVRKKVQDLEQKMKVVENLQDDFDFNYKTLKSQSDLSELNGNNQSVTRQKMQQLEQMLTALDQLRRTIISDLASLLSAMEYVQKTLTDEELADWKRRQQIACIGGPPNICLDRLENWITSLAESQLQIRQQIKKLEELQQKVSYKGDPIVQHRPMLEERIVELFRNLMKSAFVVERQPCMPMHPDRPLVIKTGVQFTNKVRLLVKFPELNYQLKIKVCIDKDSGDVAALRGSRKFNILGTNTKVMNMEESNNGSLSAEFKHLTLREQRCGNGGRANCDASLIVTEELHLITFETEVYHQGLKIDLETHSLPVVVISNICQMPNAWASILWYNMLTNNPKNVNFFTKPPIGTWDQVAEVLSWQFSSTTKRGLSIEQLTTLAEKLLGPGVNYSGCQITWAKFCKENMAGKGFSFWVWLDNIIDLVKKYILALWNEGYIMGFISKERERAILSTKPPGTFLLRFSESSKEGGITFTWVEKDISGKTQIQSVEPYTKQQLNNMSFAEIIMGYKIMDATNILVSPLVYLYPDIPKEEAFGKYCRPESQEHQEPTDPGSTAPYLKTKFICVTPTTCSSTLDLPMSPRTLDSLMQFPGEGADSSAGNQFETLTFDMELTSECASSPM.

The Essential for nuclear import motif lies at 150-162 (DVRKKVQDLEQKM). The 91-residue stretch at 580-670 (WNEGYIMGFI…DATNILVSPL (91 aa)) folds into the SH2 domain. Serine 728 carries the post-translational modification Phosphoserine; by NLK.

The protein belongs to the transcription factor STAT family. As to quaternary structure, forms a homodimer or a heterodimer with a related family member, such as stat1. Interacts with nlk.2. Post-translationally, phosphorylation of both tyrosine and serine residues, together with dimerization, is required for mesoderm induction.

The protein resides in the cytoplasm. It localises to the nucleus. Functionally, transcription factor that binds to target promoter sequences and activates transcription upon il6st/gp130 stimulation. Mediates ventralization of embryos, at least in part via inhibition of smad2 signaling. Required for hairy2 to induce dll1/delta1 and promote neural crest cell proliferation and differentiation. Involved in TGFbeta-mediated mesoderm induction in early embryos, acting downstream of map3k7/tak1 and nlk.2. In Xenopus laevis (African clawed frog), this protein is Signal transducer and activator of transcription 3.1 (stat3.1).